Here is a 110-residue protein sequence, read N- to C-terminus: Thiosulfate sulfurtransferase GlpE (110 aa).

In terms of domain architecture, Rhodanese spans 17–105 (RENGAQVVDI…WRSVYPADTS (89 aa)). The active-site Cysteine persulfide intermediate is the Cys65.

This sequence belongs to the GlpE family.

The protein resides in the cytoplasm. It carries out the reaction thiosulfate + hydrogen cyanide = thiocyanate + sulfite + 2 H(+). It catalyses the reaction thiosulfate + [thioredoxin]-dithiol = [thioredoxin]-disulfide + hydrogen sulfide + sulfite + 2 H(+). Functionally, transferase that catalyzes the transfer of sulfur from thiosulfate to thiophilic acceptors such as cyanide or dithiols. May function in a CysM-independent thiosulfate assimilation pathway by catalyzing the conversion of thiosulfate to sulfite, which can then be used for L-cysteine biosynthesis. The sequence is that of Thiosulfate sulfurtransferase GlpE from Pseudomonas aeruginosa (strain LESB58).